The primary structure comprises 184 residues: Potassium-transporting ATPase KdpC subunit (184 aa).

A helical membrane pass occupies residues 6–26 (TAVLYTIISAVFLGLGYPLIM).

Belongs to the KdpC family. As to quaternary structure, the system is composed of three essential subunits: KdpA, KdpB and KdpC.

The protein localises to the cell inner membrane. Part of the high-affinity ATP-driven potassium transport (or Kdp) system, which catalyzes the hydrolysis of ATP coupled with the electrogenic transport of potassium into the cytoplasm. This subunit acts as a catalytic chaperone that increases the ATP-binding affinity of the ATP-hydrolyzing subunit KdpB by the formation of a transient KdpB/KdpC/ATP ternary complex. This is Potassium-transporting ATPase KdpC subunit from Acidobacterium capsulatum (strain ATCC 51196 / DSM 11244 / BCRC 80197 / JCM 7670 / NBRC 15755 / NCIMB 13165 / 161).